The following is a 142-amino-acid chain: MAKKVEAYIKLQVAAGMANPSPPVGPALGQHGVNIMEFCKAFNAKTESLEKGLPTPVVITVYNDRSFTFVTKTPPAAVLLKKAAGVKSGSGRPNTEKVGTVTDAQIQEIAETKAADMTGADIEAMKRSIAGTARSMGLVVEG.

Belongs to the universal ribosomal protein uL11 family. In terms of assembly, part of the ribosomal stalk of the 50S ribosomal subunit. Interacts with L10 and the large rRNA to form the base of the stalk. L10 forms an elongated spine to which L12 dimers bind in a sequential fashion forming a multimeric L10(L12)X complex. One or more lysine residues are methylated.

Its function is as follows. Forms part of the ribosomal stalk which helps the ribosome interact with GTP-bound translation factors. This is Large ribosomal subunit protein uL11 from Vibrio campbellii (strain ATCC BAA-1116).